The sequence spans 829 residues: Probable beta-glucosidase H (829 aa).

N-linked (GlcNAc...) asparagine glycosylation occurs at Asn13. The active site involves Asp225. N-linked (GlcNAc...) asparagine glycosylation is found at Asn304, Asn473, Asn602, Asn627, and Asn664. The 160-residue stretch at 389–548 (RMLSNAVIHF…DPEQMVANAV (160 aa)) folds into the PA14 domain.

The protein belongs to the glycosyl hydrolase 3 family.

The protein resides in the secreted. The catalysed reaction is Hydrolysis of terminal, non-reducing beta-D-glucosyl residues with release of beta-D-glucose.. It participates in glycan metabolism; cellulose degradation. In terms of biological role, beta-glucosidases are one of a number of cellulolytic enzymes involved in the degradation of cellulosic biomass. Catalyzes the last step releasing glucose from the inhibitory cellobiose. This chain is Probable beta-glucosidase H (bglH), found in Neosartorya fischeri (strain ATCC 1020 / DSM 3700 / CBS 544.65 / FGSC A1164 / JCM 1740 / NRRL 181 / WB 181) (Aspergillus fischerianus).